Here is a 230-residue protein sequence, read N- to C-terminus: Orotidine 5'-phosphate decarboxylase (230 aa).

Residues D10, K32, 59 to 68 (DLKYHDIPNT), T119, R180, Q189, G209, and R210 each bind substrate. The Proton donor role is filled by K61.

It belongs to the OMP decarboxylase family. Type 1 subfamily. In terms of assembly, homodimer.

The catalysed reaction is orotidine 5'-phosphate + H(+) = UMP + CO2. It participates in pyrimidine metabolism; UMP biosynthesis via de novo pathway; UMP from orotate: step 2/2. Catalyzes the decarboxylation of orotidine 5'-monophosphate (OMP) to uridine 5'-monophosphate (UMP). The chain is Orotidine 5'-phosphate decarboxylase from Glaesserella parasuis serovar 5 (strain SH0165) (Haemophilus parasuis).